The primary structure comprises 361 residues: UDP-N-acetylglucosamine--N-acetylmuramyl-(pentapeptide) pyrophosphoryl-undecaprenol N-acetylglucosamine transferase (361 aa).

UDP-N-acetyl-alpha-D-glucosamine contacts are provided by residues 12–14 (TGG), Asn-124, Arg-163, Ser-189, Ile-241, 260–265 (ALTVSE), and Gln-286.

The protein belongs to the glycosyltransferase 28 family. MurG subfamily.

The protein resides in the cell inner membrane. The enzyme catalyses di-trans,octa-cis-undecaprenyl diphospho-N-acetyl-alpha-D-muramoyl-L-alanyl-D-glutamyl-meso-2,6-diaminopimeloyl-D-alanyl-D-alanine + UDP-N-acetyl-alpha-D-glucosamine = di-trans,octa-cis-undecaprenyl diphospho-[N-acetyl-alpha-D-glucosaminyl-(1-&gt;4)]-N-acetyl-alpha-D-muramoyl-L-alanyl-D-glutamyl-meso-2,6-diaminopimeloyl-D-alanyl-D-alanine + UDP + H(+). It participates in cell wall biogenesis; peptidoglycan biosynthesis. In terms of biological role, cell wall formation. Catalyzes the transfer of a GlcNAc subunit on undecaprenyl-pyrophosphoryl-MurNAc-pentapeptide (lipid intermediate I) to form undecaprenyl-pyrophosphoryl-MurNAc-(pentapeptide)GlcNAc (lipid intermediate II). The sequence is that of UDP-N-acetylglucosamine--N-acetylmuramyl-(pentapeptide) pyrophosphoryl-undecaprenol N-acetylglucosamine transferase from Aeromonas hydrophila subsp. hydrophila (strain ATCC 7966 / DSM 30187 / BCRC 13018 / CCUG 14551 / JCM 1027 / KCTC 2358 / NCIMB 9240 / NCTC 8049).